A 334-amino-acid chain; its full sequence is L-lactate dehydrogenase (334 aa).

A disordered region spans residues 1–22 (MASTKGKLIHEMVPSKERDPPH). Basic and acidic residues predominate over residues 8 to 22 (LIHEMVPSKERDPPH). NAD(+) is bound by residues 31–59 (GQVG…VEDR) and Arg-101. Positions 108, 140, and 171 each coordinate substrate. Asn-140 is an NAD(+) binding site. Residue His-195 is the Proton acceptor of the active site. Thr-250 is a binding site for substrate.

The protein belongs to the LDH/MDH superfamily. LDH family. Homotetramer.

It localises to the cytoplasm. It catalyses the reaction (S)-lactate + NAD(+) = pyruvate + NADH + H(+). Its pathway is fermentation; pyruvate fermentation to lactate; (S)-lactate from pyruvate: step 1/1. This Petromyzon marinus (Sea lamprey) protein is L-lactate dehydrogenase.